A 732-amino-acid polypeptide reads, in one-letter code: Ets DNA-binding protein pokkuri (732 aa).

In terms of domain architecture, PNT spans 33 to 117 (SSQLAELKTQ…NVLQMLIIES (85 aa)). The disordered stretch occupies residues 133–295 (SRYPLSPHSH…PPGTPILKDI (163 aa)). Positions 141-157 (SHPPTPTWPPLNAPPEN) are enriched in pro residues. The segment covering 176–193 (NSVTLSPPPSVDSQASSP) has biased composition (polar residues). Residues 205-240 (GAAPGSAGGSAPAAGGATNTSNPTSSSASSTGSNGS) show a composition bias toward low complexity. Residues 396-479 (RLLWDFLQQL…QGERHCYQFL (84 aa)) constitute a DNA-binding region (ETS). Disordered regions lie at residues 496–548 (QSTP…NGPM), 590–647 (GPPP…TATS), and 674–732 (VAAS…HMQQ). The span at 506–539 (SPSMPQGSSQAPGSPAGQNWNPQQQSQQQQQSPQ) shows a compositional bias: low complexity. Ser543 carries the post-translational modification Phosphoserine. Residues 637–647 (LSVSSKSTATS) show a composition bias toward polar residues. Phosphoserine is present on residues Ser677, Ser682, and Ser696. Residues 690–709 (AGASNASSSPRPMDQASEQA) show a composition bias toward polar residues.

The protein belongs to the ETS family. Post-translationally, phosphorylated in response to MAPK signaling. May be phosphorylated by rl. Expressed in R7 and cone cells of the eye.

It localises to the nucleus. Its function is as follows. Ets-related protein that functions as a negative regulator of photoreceptor development acting antagonistically to pnt and the proneural signal mediated by RAS. It acts upstream of SINA to inhibit R7 development. This is Ets DNA-binding protein pokkuri (aop) from Drosophila melanogaster (Fruit fly).